The sequence spans 424 residues: Histidine--tRNA ligase (424 aa).

It belongs to the class-II aminoacyl-tRNA synthetase family. As to quaternary structure, homodimer.

The protein localises to the cytoplasm. The enzyme catalyses tRNA(His) + L-histidine + ATP = L-histidyl-tRNA(His) + AMP + diphosphate + H(+). The chain is Histidine--tRNA ligase from Sodalis glossinidius (strain morsitans).